Here is a 494-residue protein sequence, read N- to C-terminus: Inositol-trisphosphate 3-kinase homolog (494 aa).

ATP-binding positions include Ser-206, Lys-218, 260 to 262 (EDL), and Asp-276. Substrate-binding positions include Lys-278 and 322–329 (KLRYMQFR). ATP is bound by residues Lys-346 and Asp-426. Substrate is bound at residue Lys-429.

This sequence belongs to the inositol phosphokinase (IPK) family. As to expression, expressed in spermatheca.

It carries out the reaction 1D-myo-inositol 1,4,5-trisphosphate + ATP = 1D-myo-inositol 1,3,4,5-tetrakisphosphate + ADP + H(+). Unlike mammalian IP3K, may not be regulated by calmodulin. Functionally, probably by regulating inositol 1,4,5-trisphosphate levels, negatively regulates posterior body wall muscle contractions required for defecation and let-23 signaling pathway that controls spermathecal dilation and ovulation. May also regulate ovulation downstream of actin cross-linker fln-1. The protein is Inositol-trisphosphate 3-kinase homolog of Caenorhabditis elegans.